A 212-amino-acid polypeptide reads, in one-letter code: Large ribosomal subunit protein uL3 (212 aa).

Residue Gln153 is modified to N5-methylglutamine.

It belongs to the universal ribosomal protein uL3 family. As to quaternary structure, part of the 50S ribosomal subunit. Forms a cluster with proteins L14 and L19. Post-translationally, methylated by PrmB.

Functionally, one of the primary rRNA binding proteins, it binds directly near the 3'-end of the 23S rRNA, where it nucleates assembly of the 50S subunit. This chain is Large ribosomal subunit protein uL3, found in Shewanella woodyi (strain ATCC 51908 / MS32).